A 93-amino-acid chain; its full sequence is Small ribosomal subunit protein uS19 (93 aa).

Belongs to the universal ribosomal protein uS19 family.

In terms of biological role, protein S19 forms a complex with S13 that binds strongly to the 16S ribosomal RNA. The chain is Small ribosomal subunit protein uS19 from Anaplasma marginale (strain Florida).